Consider the following 139-residue polypeptide: Large-conductance mechanosensitive channel (139 aa).

The next 3 membrane-spanning stretches (helical) occupy residues 10–30 (FAVK…AAFG), 40–60 (VIMP…YYIA), and 80–100 (LAYG…FIIF).

Belongs to the MscL family. Homopentamer.

Its subcellular location is the cell inner membrane. Its function is as follows. Channel that opens in response to stretch forces in the membrane lipid bilayer. May participate in the regulation of osmotic pressure changes within the cell. The chain is Large-conductance mechanosensitive channel from Janthinobacterium sp. (strain Marseille) (Minibacterium massiliensis).